We begin with the raw amino-acid sequence, 412 residues long: MRLASSSTSLPVPAAGHHPLPLTVGVLGSGHAGTALAAWFASRHVSTALWAPADHPGSISAIKANEGVVTTEGVINGSFTVSASDDLLAVIRSSHLLIIVTRADVHDSFVSELANFNGELAEKDILVVCGHGFSMKYERQLQCKRILETDNSPTTSKLSDKKKCKVNIKEMKASFGLSCFPIHRNDVGVIDLPEDIKIIFAQLFTARIIPIPPLQVLFFSNYITHAVAAVMNIGSVRDPVNSLTKRAEQWLLELDERTPRAETGFFFYGEGSNTYVCKVQEQIDQERRKVAKACGLHLNSLLQECNDEYGTDYATLREYCLAPSPHNVHYACPDNMEHRYFSEELCSLEDIAAIATITKIEMPLTRAFINIIHAGKGNFPPTDKTSSVIGNFRSGDLIRFGATIFVKDEKMK.

Belongs to the lysopine/nopaline/octopine/opine/vitopine dehydrogenases family. Homotetramer.

It catalyses the reaction D-nopaline + NADP(+) + H2O = L-arginine + 2-oxoglutarate + NADPH + H(+). This is D-nopaline dehydrogenase (nos) from Agrobacterium vitis (Rhizobium vitis).